The following is a 408-amino-acid chain: Arginine biosynthesis bifunctional protein ArgJ (408 aa).

Substrate contacts are provided by T158, K184, T195, E281, N403, and T408. Catalysis depends on T195, which acts as the Nucleophile.

Belongs to the ArgJ family. Heterotetramer of two alpha and two beta chains.

The protein localises to the cytoplasm. The catalysed reaction is N(2)-acetyl-L-ornithine + L-glutamate = N-acetyl-L-glutamate + L-ornithine. The enzyme catalyses L-glutamate + acetyl-CoA = N-acetyl-L-glutamate + CoA + H(+). Its pathway is amino-acid biosynthesis; L-arginine biosynthesis; L-ornithine and N-acetyl-L-glutamate from L-glutamate and N(2)-acetyl-L-ornithine (cyclic): step 1/1. It functions in the pathway amino-acid biosynthesis; L-arginine biosynthesis; N(2)-acetyl-L-ornithine from L-glutamate: step 1/4. Functionally, catalyzes two activities which are involved in the cyclic version of arginine biosynthesis: the synthesis of N-acetylglutamate from glutamate and acetyl-CoA as the acetyl donor, and of ornithine by transacetylation between N(2)-acetylornithine and glutamate. This chain is Arginine biosynthesis bifunctional protein ArgJ, found in Bacillus cereus (strain ATCC 14579 / DSM 31 / CCUG 7414 / JCM 2152 / NBRC 15305 / NCIMB 9373 / NCTC 2599 / NRRL B-3711).